We begin with the raw amino-acid sequence, 358 residues long: Ganglioside-induced differentiation-associated protein 1 (358 aa).

The GST N-terminal domain occupies 24 to 105 (VHLILYHWTH…YLEQTFLDER (82 aa)). Residues lysine 50, lysine 172, lysine 173, lysine 188, and lysine 190 each participate in a glycyl lysine isopeptide (Lys-Gly) (interchain with G-Cter in ubiquitin) cross-link. One can recognise a GST C-terminal domain in the interval 153–309 (PAYATTRIRS…LISAVLPTAF (157 aa)). Lysine 203 is subject to N6-acetyllysine; alternate. Lysine 203 is covalently cross-linked (Glycyl lysine isopeptide (Lys-Gly) (interchain with G-Cter in ubiquitin); alternate). Glycyl lysine isopeptide (Lys-Gly) (interchain with G-Cter in ubiquitin) cross-links involve residues lysine 206, lysine 207, and lysine 214. The next 2 helical transmembrane spans lie at 292–312 (VLGH…FRVA) and 320–340 (LGST…FMLF). Residues 320 to 358 (LGSTLVVGLLVGMGYFAFMLFRRRLGSMILALRPRPNYF) form a required for mitochondrial localization region.

It belongs to the GST superfamily. In terms of assembly, homodimer. In terms of processing, ubiquitinated by PRKN during mitophagy, leading to its degradation and enhancement of mitophagy. Deubiquitinated by USP30. Expressed in brain, spinal cord, muscles and intestinal villi. In the central nervous system expressed most prominently in the cortex, cerebellum, thalamus, olfactory bulb, and spinal cord. Expressed also in sciatic nerves and in dorsal root ganglia.

Its subcellular location is the mitochondrion outer membrane. It is found in the cytoplasm. Functionally, regulates the mitochondrial network by promoting mitochondrial fission. The sequence is that of Ganglioside-induced differentiation-associated protein 1 (Gdap1) from Mus musculus (Mouse).